A 372-amino-acid polypeptide reads, in one-letter code: Steroid C26-monooxygenase (372 aa).

A heme-binding site is contributed by C314.

Belongs to the cytochrome P450 family. It depends on heme as a cofactor.

It carries out the reaction cholest-4-en-3-one + 6 reduced [2Fe-2S]-[ferredoxin] + 3 O2 + 5 H(+) = (25R)-3-oxocholest-4-en-26-oate + 6 oxidized [2Fe-2S]-[ferredoxin] + 4 H2O. It participates in steroid metabolism; cholesterol degradation. Functionally, involved in the utilization of cholesterol as the sole carbon and energy source by degrading the side chain during infection. Primarily catalyzes the sequential oxidation of the terminal methyl of cholest-4-en-3-one into (25R)-26-hydroxycholest-4-en-3-one (alcohol), (25R)-26-oxocholest-4-en-3-one (aldehyde), to finally yield the carboxylic acid (25R)-3-oxocholest-4-en-26-oate. Also able to sequentially oxidize cholesterol itself, not only cholest-4-en-3-one. The sequence is that of Steroid C26-monooxygenase (cyp142) from Mycobacterium tuberculosis (strain CDC 1551 / Oshkosh).